A 331-amino-acid chain; its full sequence is Ketol-acid reductoisomerase (NADP(+)) (331 aa).

In terms of domain architecture, KARI N-terminal Rossmann spans 2–182 (ARMYYDADAN…GGTRGGILET (181 aa)). Residues 25–28 (YGSQ), S51, S53, and 83–86 (DDVQ) each bind NADP(+). The active site involves H108. An NADP(+)-binding site is contributed by G134. The KARI C-terminal knotted domain occupies 183-328 (TFREETETDL…KDLRAMFSWL (146 aa)). Residues D191, E195, E227, and E231 each contribute to the Mg(2+) site. Position 252 (S252) interacts with substrate.

It belongs to the ketol-acid reductoisomerase family. It depends on Mg(2+) as a cofactor.

The enzyme catalyses (2R)-2,3-dihydroxy-3-methylbutanoate + NADP(+) = (2S)-2-acetolactate + NADPH + H(+). It carries out the reaction (2R,3R)-2,3-dihydroxy-3-methylpentanoate + NADP(+) = (S)-2-ethyl-2-hydroxy-3-oxobutanoate + NADPH + H(+). The protein operates within amino-acid biosynthesis; L-isoleucine biosynthesis; L-isoleucine from 2-oxobutanoate: step 2/4. It participates in amino-acid biosynthesis; L-valine biosynthesis; L-valine from pyruvate: step 2/4. Involved in the biosynthesis of branched-chain amino acids (BCAA). Catalyzes an alkyl-migration followed by a ketol-acid reduction of (S)-2-acetolactate (S2AL) to yield (R)-2,3-dihydroxy-isovalerate. In the isomerase reaction, S2AL is rearranged via a Mg-dependent methyl migration to produce 3-hydroxy-3-methyl-2-ketobutyrate (HMKB). In the reductase reaction, this 2-ketoacid undergoes a metal-dependent reduction by NADPH to yield (R)-2,3-dihydroxy-isovalerate. This Picosynechococcus sp. (strain ATCC 27264 / PCC 7002 / PR-6) (Agmenellum quadruplicatum) protein is Ketol-acid reductoisomerase (NADP(+)).